The sequence spans 198 residues: Protein GrpE (198 aa).

The span at 1-21 (MMKKAEDPLQDREGTIQEHTE) shows a compositional bias: basic and acidic residues. Residues 1-56 (MMKKAEDPLQDREGTIQEHTEGQAGTAAADQSAAVETPESRIAGLEREVQAEKEQN) form a disordered region. The span at 22-34 (GQAGTAAADQSAA) shows a compositional bias: low complexity. Residues 44–56 (GLEREVQAEKEQN) are compositionally biased toward basic and acidic residues.

It belongs to the GrpE family. Homodimer.

The protein resides in the cytoplasm. In terms of biological role, participates actively in the response to hyperosmotic and heat shock by preventing the aggregation of stress-denatured proteins, in association with DnaK and GrpE. It is the nucleotide exchange factor for DnaK and may function as a thermosensor. Unfolded proteins bind initially to DnaJ; upon interaction with the DnaJ-bound protein, DnaK hydrolyzes its bound ATP, resulting in the formation of a stable complex. GrpE releases ADP from DnaK; ATP binding to DnaK triggers the release of the substrate protein, thus completing the reaction cycle. Several rounds of ATP-dependent interactions between DnaJ, DnaK and GrpE are required for fully efficient folding. The sequence is that of Protein GrpE from Chlorobium luteolum (strain DSM 273 / BCRC 81028 / 2530) (Pelodictyon luteolum).